The sequence spans 145 residues: Protein cornichon homolog 1 (145 aa).

Helical transmembrane passes span 5 to 25 (FAAF…FFAI), 57 to 77 (IIHG…SILA), and 116 to 136 (LRIS…YLYA).

It belongs to the cornichon family. In terms of assembly, interacts with glr-1. Widely expressed in the nervous system including in the AVA interneurons.

It is found in the endoplasmic reticulum membrane. The protein resides in the synapse. The protein localises to the cell projection. Its subcellular location is the dendrite. Functionally, negatively regulates export of glr-1 from the endoplasmic reticulum to synapses. The sequence is that of Protein cornichon homolog 1 from Caenorhabditis elegans.